Here is a 476-residue protein sequence, read N- to C-terminus: Cyclase-associated protein 1 (476 aa).

Disordered stretches follow at residues 224–262 (KPASAPAKGPPGAPAPPPAPLFSAESSKPSSSSNQKQGM) and 277–319 (GLRK…PPKM). Pro residues predominate over residues 231–243 (KGPPGAPAPPPAP). Positions 246–256 (SAESSKPSSSS) are enriched in low complexity. The segment covering 280–293 (KVTDDMKTKNRADR) has biased composition (basic and acidic residues). Positions 316–453 (PPKMELQMGR…PDGDWVEHAL (138 aa)) constitute a C-CAP/cofactor C-like domain.

This sequence belongs to the CAP family. Expressed in roots, cotyledons, leaves, stems, flowers, pollen and shoots. Not detected in siliques.

In terms of biological role, actin monomer binding protein that accelerates the exchange of ADP for ATP. Regulates the pool of unpolymerized ATP-actin. Key intermediate between actin-depolymerizing factor (ADF)-mediated disassembly and the profilin-based nucleation and elongation machinery. This is Cyclase-associated protein 1 (CAP1) from Arabidopsis thaliana (Mouse-ear cress).